Consider the following 352-residue polypeptide: NADH-ubiquinone oxidoreductase chain 2 (352 aa).

11 consecutive transmembrane segments (helical) span residues 4–24 (MISI…VSAE), 26–46 (WFVI…ILWF), 60–80 (FLVQ…QAWF), 96–116 (LCLS…FWLP), 124–144 (FIQG…LLFY), 150–170 (FSYF…WGGL), 178–198 (ILAF…AFSL), 205–225 (LFIY…LSIF), 241–261 (ITLV…TGFI), 274–294 (GFIF…FFYL), and 330–350 (LVSS…PLYI).

Belongs to the complex I subunit 2 family.

The protein localises to the mitochondrion inner membrane. It catalyses the reaction a ubiquinone + NADH + 5 H(+)(in) = a ubiquinol + NAD(+) + 4 H(+)(out). Its function is as follows. Core subunit of the mitochondrial membrane respiratory chain NADH dehydrogenase (Complex I) that is believed to belong to the minimal assembly required for catalysis. Complex I functions in the transfer of electrons from NADH to the respiratory chain. The immediate electron acceptor for the enzyme is believed to be ubiquinone. The polypeptide is NADH-ubiquinone oxidoreductase chain 2 (ND2) (Paracentrotus lividus (Common sea urchin)).